Consider the following 367-residue polypeptide: Glutamate 5-kinase (367 aa).

Position 8 (lysine 8) interacts with ATP. The substrate site is built by serine 49, aspartate 136, and asparagine 148. ATP contacts are provided by residues threonine 168–aspartate 169 and threonine 210–lysine 216. Residues alanine 275–alanine 353 enclose the PUA domain.

It belongs to the glutamate 5-kinase family.

The protein localises to the cytoplasm. It catalyses the reaction L-glutamate + ATP = L-glutamyl 5-phosphate + ADP. It participates in amino-acid biosynthesis; L-proline biosynthesis; L-glutamate 5-semialdehyde from L-glutamate: step 1/2. Functionally, catalyzes the transfer of a phosphate group to glutamate to form L-glutamate 5-phosphate. The polypeptide is Glutamate 5-kinase (Nostoc punctiforme (strain ATCC 29133 / PCC 73102)).